We begin with the raw amino-acid sequence, 355 residues long: Guanine nucleotide-binding protein subunit alpha-14 (355 aa).

The G-alpha domain occupies 34 to 355 (RELKLLLLGT…QLNLREFNLV (322 aa)). Positions 37–50 (KLLLLGTGESGKST) are G1 motif. GTP contacts are provided by residues 42–49 (GTGESGKS), 176–182 (LRVRVPT), 201–205 (DVGGQ), 270–273 (NKKD), and alanine 327. Serine 49 and threonine 182 together coordinate Mg(2+). Residues 174-182 (DVLRVRVPT) form a G2 motif region. A G3 motif region spans residues 197 to 206 (FRMVDVGGQR). The interval 266–273 (ILFLNKKD) is G4 motif. Positions 325 to 330 (TCATDT) are G5 motif.

It belongs to the G-alpha family. G(q) subfamily. G proteins are composed of 3 units; alpha, beta and gamma. The alpha chain contains the guanine nucleotide binding site.

In terms of biological role, guanine nucleotide-binding proteins (G proteins) are involved as modulators or transducers in various transmembrane signaling systems. The polypeptide is Guanine nucleotide-binding protein subunit alpha-14 (GNA14) (Bos taurus (Bovine)).